The primary structure comprises 485 residues: Palmitoyltransferase ZDHHC1 (485 aa).

The interval 1 to 41 (MYKMNICNKPSNKTAPEKSVWTAPAQPSGPSPELQGQRSRR) is disordered. Topologically, residues 1–52 (MYKMNICNKPSNKTAPEKSVWTAPAQPSGPSPELQGQRSRRNGWSWPPHPLQ) are cytoplasmic. Residues 1–271 (MYKMNICNKP…GHLLCFHIYL (271 aa)) form a mediates interaction with STING1 region. Residues 53-73 (IVAWLLYLFFAVIGFGILVPL) form a helical membrane-spanning segment. Residues 74–77 (LPHH) are Lumenal-facing. The helical transmembrane segment at 78–98 (WVPAGYACMGAIFAGHLVVHL) threads the bilayer. Residues 99-185 (TAVSIDPADA…YRLFLHSVAS (87 aa)) lie on the Cytoplasmic side of the membrane. Residues 134-184 (LHCNLCNVDVSARSKHCSACNKCVCGFDHHCKWLNNCVGERNYRLFLHSVA) enclose the DHHC domain. The S-palmitoyl cysteine intermediate role is filled by Cys164. The chain crosses the membrane as a helical span at residues 186 to 206 (ALLGVLLLVLVATYVFVEFFV). Residues 207 to 241 (NPMRLRTNRHFEVLKNHTDVWFVFLPAAPVETQAP) are Lumenal-facing. A helical transmembrane segment spans residues 242-262 (AILALAALLILLGLLSTALLG). Over 263–485 (HLLCFHIYLM…RGRRVRPPFS (223 aa)) the chain is Cytoplasmic. Disordered stretches follow at residues 324–358 (EPPG…GPPV) and 462–485 (LWPP…PPFS). Residues 475-485 (WRGRRVRPPFS) are compositionally biased toward basic residues.

The protein belongs to the DHHC palmitoyltransferase family. In terms of assembly, interacts with STING1; ZDHHC1 constitutively interacts with STING1 and in presence of DNA viruses activates it by promoting its cGAMP-induced oligomerization and the recruitment of downstream signaling components. Widely expressed with significant expression in heart, brain, placenta, lung, liver, kidney, testis, thymus and small intestine. Expressed at lower levels in adult pancreas and lung.

It is found in the endosome membrane. It localises to the endoplasmic reticulum membrane. The protein resides in the golgi apparatus. The catalysed reaction is L-cysteinyl-[protein] + hexadecanoyl-CoA = S-hexadecanoyl-L-cysteinyl-[protein] + CoA. In terms of biological role, palmitoyltransferase that catalyzes the addition of palmitate onto various protein substrates, such as NCDN and NLRP3. Has a palmitoyltransferase activity toward NCDN and regulates NCDN association with endosome membranes through this palmitoylation. Acts as an activator of the NLRP3 inflammasome by mediating palmitoylation of 'Cys-130' and 'Cys-958' of NLRP3, thereby promoting NLRP3 phosphorylation and activation by NEK7. Its function is as follows. Also has a palmitoyltransferase activity-independent function in DNA virus-triggered and CGAS-mediated innate immune response. Functions as an activator of STING1 by promoting its cGAMP-induced oligomerization and the recruitment of downstream signaling components. The polypeptide is Palmitoyltransferase ZDHHC1 (Homo sapiens (Human)).